We begin with the raw amino-acid sequence, 697 residues long: Potassium-transporting ATPase ATP-binding subunit (697 aa).

Transmembrane regions (helical) follow at residues 55 to 75 (PIMFVVEIGFIITFILSFLPS), 82 to 102 (GWFNITVSFILLFTVLFANFA), 245 to 265 (LTFIFLIVVVTLPIFTNYLGF), and 271 to 291 (VLVALLVCLIPTTIGGLLSAI). Residue D324 is the 4-aspartylphosphate intermediate of the active site. ATP contacts are provided by residues D361, E365, 393 to 400 (FKAETRMS), and K412. Mg(2+) contacts are provided by D535 and D539. Helical transmembrane passes span 605-625 (FAIIPAMFTLAIPQMEALNIM), 633-653 (AILSALLFNAVIIPLLIPLAM), and 677-697 (GGVIVPFIGIKVIDMIVGLFI).

The protein belongs to the cation transport ATPase (P-type) (TC 3.A.3) family. Type IA subfamily. As to quaternary structure, the system is composed of three essential subunits: KdpA, KdpB and KdpC.

The protein localises to the cell membrane. The enzyme catalyses K(+)(out) + ATP + H2O = K(+)(in) + ADP + phosphate + H(+). Part of the high-affinity ATP-driven potassium transport (or Kdp) system, which catalyzes the hydrolysis of ATP coupled with the electrogenic transport of potassium into the cytoplasm. This subunit is responsible for energy coupling to the transport system and for the release of the potassium ions to the cytoplasm. The sequence is that of Potassium-transporting ATPase ATP-binding subunit from Bacillus cereus (strain AH187).